Here is a 156-residue protein sequence, read N- to C-terminus: Small ribosomal subunit protein uS7 (156 aa).

The protein belongs to the universal ribosomal protein uS7 family. In terms of assembly, part of the 30S ribosomal subunit. Contacts proteins S9 and S11.

In terms of biological role, one of the primary rRNA binding proteins, it binds directly to 16S rRNA where it nucleates assembly of the head domain of the 30S subunit. Is located at the subunit interface close to the decoding center, probably blocks exit of the E-site tRNA. The chain is Small ribosomal subunit protein uS7 from Oceanobacillus iheyensis (strain DSM 14371 / CIP 107618 / JCM 11309 / KCTC 3954 / HTE831).